The primary structure comprises 346 residues: Dihydroorotase (346 aa).

Zn(2+)-binding residues include His13 and His15. Substrate is bound by residues 15–17 and Asn41; that span reads HLR. Lys99, His136, and His174 together coordinate Zn(2+). Lys99 is subject to N6-carboxylysine. His136 is a binding site for substrate. Leu219 lines the substrate pocket. Asp247 is a Zn(2+) binding site. Asp247 is an active-site residue. Positions 251 and 263 each coordinate substrate.

Belongs to the metallo-dependent hydrolases superfamily. DHOase family. Class II DHOase subfamily. Homodimer. The cofactor is Zn(2+).

The enzyme catalyses (S)-dihydroorotate + H2O = N-carbamoyl-L-aspartate + H(+). The protein operates within pyrimidine metabolism; UMP biosynthesis via de novo pathway; (S)-dihydroorotate from bicarbonate: step 3/3. Functionally, catalyzes the reversible cyclization of carbamoyl aspartate to dihydroorotate. This chain is Dihydroorotase, found in Chelativorans sp. (strain BNC1).